A 505-amino-acid polypeptide reads, in one-letter code: N-succinylglutamate 5-semialdehyde dehydrogenase (505 aa).

234–239 (GSAHTG) contacts NAD(+). Residues E257 and C291 contribute to the active site.

This sequence belongs to the aldehyde dehydrogenase family. AstD subfamily.

It catalyses the reaction N-succinyl-L-glutamate 5-semialdehyde + NAD(+) + H2O = N-succinyl-L-glutamate + NADH + 2 H(+). It participates in amino-acid degradation; L-arginine degradation via AST pathway; L-glutamate and succinate from L-arginine: step 4/5. Functionally, catalyzes the NAD-dependent reduction of succinylglutamate semialdehyde into succinylglutamate. The protein is N-succinylglutamate 5-semialdehyde dehydrogenase of Yersinia pestis (strain Pestoides F).